We begin with the raw amino-acid sequence, 500 residues long: NAD(P)H-quinone oxidoreductase chain 4, chloroplastic (500 aa).

Transmembrane regions (helical) follow at residues 4-24 (FPWL…IGFL), 37-57 (ICIC…HFQL), 87-107 (MGPV…AWPV), 113-130 (LFHF…GSFS), 134-154 (LLLF…LLSL), 167-187 (FILY…GMGL), 208-228 (ALEI…SPII), 242-262 (HYST…YGLV), 272-292 (AHSI…IYAA), 305-325 (IAYS…SITD), 330-350 (GSIL…FLAG), 386-406 (LALP…GIIT), 416-436 (ILIT…SLSM), and 462-482 (LFIL…PDFV).

This sequence belongs to the complex I subunit 4 family.

It is found in the plastid. The protein localises to the chloroplast thylakoid membrane. The enzyme catalyses a plastoquinone + NADH + (n+1) H(+)(in) = a plastoquinol + NAD(+) + n H(+)(out). It carries out the reaction a plastoquinone + NADPH + (n+1) H(+)(in) = a plastoquinol + NADP(+) + n H(+)(out). This Illicium oligandrum (Star anise) protein is NAD(P)H-quinone oxidoreductase chain 4, chloroplastic.